We begin with the raw amino-acid sequence, 142 residues long: Pre-mRNA-splicing factor cwf18 (142 aa).

Basic and acidic residues predominate over residues 24–45; sequence LENKTRDSQEVQKNVIEHRNYD. The disordered stretch occupies residues 24–54; sequence LENKTRDSQEVQKNVIEHRNYDPEVQAPKMG.

Belongs to the 40S cdc5-associated complex (or cwf complex), a spliceosome sub-complex reminiscent of a late-stage spliceosome composed of the U2, U5 and U6 snRNAs and at least brr2, cdc5, cwf2/prp3, cwf3/syf1, cwf4/syf3, cwf5/ecm2, spp42/cwf6, cwf7/spf27, cwf8, cwf9, cwf10, cwf11, cwf12, prp45/cwf13, cwf14, cwf15, cwf16, cwf17, cwf18, cwf19, cwf20, cwf21, cwf22, cwf23, cwf24, cwf25, cwf26, cyp7/cwf27, cwf28, cwf29/ist3, lea1, msl1, prp5/cwf1, prp10, prp12/sap130, prp17, prp22, sap61, sap62, sap114, sap145, slu7, smb1, smd1, smd3, smf1, smg1 and syf2.

Its subcellular location is the nucleus. In terms of biological role, involved in mRNA splicing where it associates with cdc5 and the other cwf proteins as part of the spliceosome. This Schizosaccharomyces pombe (strain 972 / ATCC 24843) (Fission yeast) protein is Pre-mRNA-splicing factor cwf18 (cwf18).